Here is a 67-residue protein sequence, read N- to C-terminus: Tachystatin-A2 (67 aa).

The signal sequence occupies residues 1–23 (MKLQNTLILIGCLFLMGAMIGDA). Disulfide bonds link Cys-27-Cys-47, Cys-34-Cys-52, and Cys-46-Cys-64.

Granular hemocytes, small secretory granules.

It localises to the secreted. Exhibits stronger antimicrobial activity against the Gram-positive bacteria (S.aureus (IC(50)=4.2 ug/ml)) and fungi (C.albicans (IC(50)=3.0 ug/ml) and P.pastoris (IC(50)=0.5 ug/ml)) than Gram-negative bacteria (E.coli (IC(50)=25 ug/ml)). Binds to chitin (8.4 uM are required to obtain 50% of binding). Does not cause hemolysis on sheep erythrocytes. Has no blocking activity on the P-type calcium channel. Has also been shown to weakly inhibit Kv1.2/KCNA2 voltage-gated potassium channels and TRPV1 receptors. The chain is Tachystatin-A2 from Tachypleus tridentatus (Japanese horseshoe crab).